A 158-amino-acid polypeptide reads, in one-letter code: NAD(P)H-quinone oxidoreductase subunit J, chloroplastic (158 aa).

This sequence belongs to the complex I 30 kDa subunit family. NDH is composed of at least 16 different subunits, 5 of which are encoded in the nucleus.

It is found in the plastid. It localises to the chloroplast thylakoid membrane. It catalyses the reaction a plastoquinone + NADH + (n+1) H(+)(in) = a plastoquinol + NAD(+) + n H(+)(out). The enzyme catalyses a plastoquinone + NADPH + (n+1) H(+)(in) = a plastoquinol + NADP(+) + n H(+)(out). In terms of biological role, NDH shuttles electrons from NAD(P)H:plastoquinone, via FMN and iron-sulfur (Fe-S) centers, to quinones in the photosynthetic chain and possibly in a chloroplast respiratory chain. The immediate electron acceptor for the enzyme in this species is believed to be plastoquinone. Couples the redox reaction to proton translocation, and thus conserves the redox energy in a proton gradient. This Solanum tuberosum (Potato) protein is NAD(P)H-quinone oxidoreductase subunit J, chloroplastic.